The following is a 417-amino-acid chain: Cytoplasmic tRNA 2-thiolation protein 2 (417 aa).

Over residues 1–11 the composition is skewed to acidic residues; that stretch reads MCSIVEDDFGD. The tract at residues 1 to 24 is disordered; the sequence is MCSIVEDDFGDEGGAHAMKEDTPQ. Residues 13–22 show a composition bias toward basic and acidic residues; the sequence is GGAHAMKEDT.

The protein belongs to the CTU2/NCS2 family.

The protein localises to the cytoplasm. Its pathway is tRNA modification; 5-methoxycarbonylmethyl-2-thiouridine-tRNA biosynthesis. Plays a central role in 2-thiolation of mcm(5)S(2)U at tRNA wobble positions of tRNA(Lys), tRNA(Glu) and tRNA(Gln). May act by forming a heterodimer with NCS6/CTU1 that ligates sulfur from thiocarboxylated URM1 onto the uridine of tRNAs at wobble position. In Anopheles gambiae (African malaria mosquito), this protein is Cytoplasmic tRNA 2-thiolation protein 2.